The primary structure comprises 267 residues: 5'-nucleotidase SurE (267 aa).

Asp-9, Asp-10, Ser-40, and Asn-97 together coordinate a divalent metal cation.

The protein belongs to the SurE nucleotidase family. The cofactor is a divalent metal cation.

The protein resides in the cytoplasm. The catalysed reaction is a ribonucleoside 5'-phosphate + H2O = a ribonucleoside + phosphate. Its function is as follows. Nucleotidase that shows phosphatase activity on nucleoside 5'-monophosphates. The protein is 5'-nucleotidase SurE of Helicobacter pylori (strain G27).